The chain runs to 349 residues: Protein-glutamate methylesterase/protein-glutamine glutaminase 2 (349 aa).

One can recognise a Response regulatory domain in the interval 4–121; the sequence is SVLVVDDSAL…AEGMQAYAEE (118 aa). Aspartate 55 is subject to 4-aspartylphosphate. The CheB-type methylesterase domain maps to 151–343; the sequence is LLSTEKIIAL…AALLQQAARR (193 aa). Residues serine 163, histidine 189, and aspartate 285 contribute to the active site.

The protein belongs to the CheB family. In terms of assembly, interacts with the C-terminal pentapeptide GWEEF of McpB. Phosphorylated by CheA. Phosphorylation of the N-terminal regulatory domain activates the methylesterase activity.

The protein resides in the cytoplasm. The enzyme catalyses [protein]-L-glutamate 5-O-methyl ester + H2O = L-glutamyl-[protein] + methanol + H(+). It carries out the reaction L-glutaminyl-[protein] + H2O = L-glutamyl-[protein] + NH4(+). Functionally, involved in chemotaxis. Part of a chemotaxis signal transduction system that modulates chemotaxis in response to various stimuli. Catalyzes the demethylation of specific methylglutamate residues introduced into the chemoreceptors (methyl-accepting chemotaxis proteins or MCP) by CheR. Also mediates the irreversible deamidation of specific glutamine residues to glutamic acid. Acts on the methyl-accepting chemotaxis protein McpB. May be involved in a specific chemotactic response, which takes place during infection and is required for P.aeruginosa pathogenicity. The chain is Protein-glutamate methylesterase/protein-glutamine glutaminase 2 from Pseudomonas aeruginosa (strain ATCC 15692 / DSM 22644 / CIP 104116 / JCM 14847 / LMG 12228 / 1C / PRS 101 / PAO1).